The following is a 2123-amino-acid chain: Bromodomain adjacent to zinc finger domain protein 2B (2123 aa).

Disordered regions lie at residues 1 to 129 (MESG…VNGT), 144 to 306 (TPAS…LSQQ), 357 to 402 (PSPD…EMGK), 473 to 534 (NENV…HPHP), 546 to 691 (RGTD…RRVA), 756 to 793 (RAMD…GSAE), and 937 to 960 (ARKK…LNKE). Residues 7–46 (LPSSPASSTTPTSSSAPSVASAVSKSSLSTGAASLSSTAS) show a composition bias toward low complexity. A compositionally biased stretch (pro residues) spans 83 to 95 (FFPPLLGIPPLFA). The span at 100 to 116 (NHDSSFHSRTSGKSSRN) shows a compositional bias: polar residues. 2 stretches are compositionally biased toward low complexity: residues 147 to 157 (SSSMGQNQSTS) and 193 to 216 (ESSS…ISSS). Positions 217–243 (DSDDLEEEEEEDQSVEESEDDDSDSET) are enriched in acidic residues. A compositionally biased stretch (basic and acidic residues) spans 259 to 277 (SDPKTDGQKATEKAQERRT). Low complexity-rich tracts occupy residues 291-306 (PPFQ…LSQQ) and 366-379 (NKNT…LTSE). A compositionally biased stretch (polar residues) spans 473–502 (NENVSSSTPFSSPVNLSTSGRRAPGSQTPA). Over residues 546 to 559 (RGTDSDVPSSKDSE) the composition is skewed to basic and acidic residues. Residues 560-587 (DSNEDEEEDDEEEDEEDDEDDESDDSQS) show a composition bias toward acidic residues. Residues 588-597 (ESDSNSQSDS) show a composition bias toward low complexity. Residues 598–615 (EGSEDDEEKDQEESDSDT) are compositionally biased toward acidic residues. Low complexity-rich tracts occupy residues 628–637 (SSSAKSPPSS) and 671–683 (TSSS…PHSG). One can recognise an MBD domain in the interval 690-765 (VADDQELRIP…RAMDGRRGRP (76 aa)). Basic and acidic residues predominate over residues 756 to 778 (RAMDGRRGRPPNPDRPRAREESR). The DDT domain occupies 1004–1069 (GTTFSDCLMV…LSAAVCDPGL (66 aa)). Disordered stretches follow at residues 1183 to 1260 (RDAS…QTAS), 1396 to 1444 (PPES…KTDA), 1499 to 1526 (TLVT…SSVQ), and 1588 to 1614 (FLTS…AQPV). Acidic residues predominate over residues 1214–1238 (SDYDDDDDDDSDDQADEDEEDEEDK). Positions 1239-1248 (DDKKGKKTDI) are enriched in basic and acidic residues. A coiled-coil region spans residues 1254-1281 (EGDQTASVEELEKQIEKLSKQQSQYRRK). Polar residues-rich tracts occupy residues 1408–1422 (NVST…QNSG) and 1430–1444 (PSAT…KTDA). The segment covering 1505 to 1515 (SQPPSKSPSPA) has biased composition (pro residues). Residues 1588-1600 (FLTSSVASSKSDS) are compositionally biased toward low complexity. A PHD-type zinc finger spans residues 1886–1936 (KVYCQICRKGDNEELLLLCDGCDKGCHTYCHRPKITTIPDGDWFCPACISK). The segment at 1949–2013 (VKGKKTNDSK…AESTTSIKKP (65 aa)) is disordered. The span at 1984–1995 (GSKELKKRKMEE) shows a compositional bias: basic and acidic residues. Over residues 1996-2010 (TTSLNLSKAESTTSI) the composition is skewed to polar residues. The region spanning 2015 to 2119 (KDESRDLALC…KYFEKKWTDT (105 aa)) is the Bromo domain.

The protein belongs to the WAL family. As to quaternary structure, component of the BRF-1 ISWI chromatin remodeling complex, at least composed of SMARCA1 and BAZ2B, which regulates the spacing of histone octamers on the DNA template to facilitate access to DNA. Within the BRF-1 ISWI chromatin remodeling complex interacts with SMARCA1; the interaction is direct. Component of the BRF-5 ISWI chromatin remodeling complex, at least composed of SMARCA5/SNF2H and BAZ2B, which regulates the spacing of histone octamers on the DNA template to facilitate access to DNA. Within the BRF-5 ISWI chromatin remodeling complex interacts with SMARCA5/SNF2H; the interaction is direct. Interacts with acetylated lysine residues on histone H1.4, H2A, H2B, H3 and H4 (in vitro). Interacts with EHMT1.

Its subcellular location is the nucleus. Regulatory subunit of the ATP-dependent BRF-1 and BRF-5 ISWI chromatin remodeling complexes, which form ordered nucleosome arrays on chromatin and facilitate access to DNA during DNA-templated processes such as DNA replication, transcription, and repair. Both complexes regulate the spacing of nucleosomes along the chromatin and have the ability to slide mononucleosomes to the center of a DNA template. The BRF-1 ISWI chromatin remodeling complex has a lower ATP hydrolysis rate than the BRF-5 ISWI chromatin remodeling complex. Chromatin reader protein, involved in positively modulating the rate of age-related behavioral deterioration. Represses the expression of mitochondrial function-related genes, perhaps by occupying their promoter regions, working in concert with histone methyltransferase EHMT1. This is Bromodomain adjacent to zinc finger domain protein 2B from Mus musculus (Mouse).